Here is a 681-residue protein sequence, read N- to C-terminus: Kojibiose hydrolase (681 aa).

Positions 1–23 (MKKYIFNHVFFFLMLCGSNYLYS) are cleaved as a signal peptide. Residues Arg74, Trp343, Asp344, Trp391, Glu392, Thr407, Glu472, Trp473, Lys538, Gln539, and Asp573 each coordinate beta-D-glucose. Glu472 functions as the Proton donor in the catalytic mechanism. Catalysis depends on Glu616, which acts as the Proton acceptor.

Belongs to the glycosyl hydrolase 65 family. As to quaternary structure, homohexamer; dimer of trimers.

The protein localises to the periplasm. The enzyme catalyses kojibiose + H2O = beta-D-glucose + D-glucose. In terms of biological role, glycosidase that specifically hydrolyzes kojibiose to beta-glucose and glucose. Also hydrolyzes, with lower catalytic efficiency, longer kojioligosaccharides (from kojitriose to kojipentaose) and shorter oligosaccharides produced by the degradation of dextran-containing alpha-1,2 branches. Probably acts on alpha-(1-&gt;2)-glucosyl isomaltooligosaccharides. Shows weak activity with nigerose but has no activity toward p-nitrophenyl alpha-glucopyranoside, which is a general substrate of exo-acting alpha-glucoside hydrolases. Has a strict specificity for alpha-1,2-glucosidic linkages. Catalyzes the hydrolytic reaction via an anomer-inverting mechanism. The sequence is that of Kojibiose hydrolase from Flavobacterium johnsoniae (strain ATCC 17061 / DSM 2064 / JCM 8514 / BCRC 14874 / CCUG 350202 / NBRC 14942 / NCIMB 11054 / UW101) (Cytophaga johnsonae).